The sequence spans 123 residues: Large ribosomal subunit protein bL12 (123 aa).

This sequence belongs to the bacterial ribosomal protein bL12 family. As to quaternary structure, homodimer. Part of the ribosomal stalk of the 50S ribosomal subunit. Forms a multimeric L10(L12)X complex, where L10 forms an elongated spine to which 2 to 4 L12 dimers bind in a sequential fashion. Binds GTP-bound translation factors.

In terms of biological role, forms part of the ribosomal stalk which helps the ribosome interact with GTP-bound translation factors. Is thus essential for accurate translation. This is Large ribosomal subunit protein bL12 from Albidiferax ferrireducens (strain ATCC BAA-621 / DSM 15236 / T118) (Rhodoferax ferrireducens).